Consider the following 197-residue polypeptide: Protein GrpE (197 aa).

Residues 1–40 (MSSKEQKTPEGQAPEEIIMDRHEEIEAVEPEASAEQVDPR) are disordered.

Belongs to the GrpE family. In terms of assembly, homodimer.

It localises to the cytoplasm. Participates actively in the response to hyperosmotic and heat shock by preventing the aggregation of stress-denatured proteins, in association with DnaK and GrpE. It is the nucleotide exchange factor for DnaK and may function as a thermosensor. Unfolded proteins bind initially to DnaJ; upon interaction with the DnaJ-bound protein, DnaK hydrolyzes its bound ATP, resulting in the formation of a stable complex. GrpE releases ADP from DnaK; ATP binding to DnaK triggers the release of the substrate protein, thus completing the reaction cycle. Several rounds of ATP-dependent interactions between DnaJ, DnaK and GrpE are required for fully efficient folding. The polypeptide is Protein GrpE (Shigella flexneri serotype 5b (strain 8401)).